Here is a 553-residue protein sequence, read N- to C-terminus: Putative transport protein YidE (553 aa).

Transmembrane regions (helical) follow at residues 4–24 (IALT…IGNV), 28–48 (GVGL…HFVS), 65–85 (FGLI…FFAS), 95–115 (LFAV…HKLF), and 158–178 (MSYA…MWML). 2 RCK C-terminal domains span residues 191–276 (QQHE…VIGQ) and 279–361 (DTSL…VLGN). The next 6 helical transmembrane spans lie at 371–391 (MLPV…PVFV), 393–413 (GFPA…ALIL), 439–459 (IVLF…HTLV), 464–484 (LSWI…VGIL), 493–513 (YLTM…LAFA), and 533–553 (LVMF…WSIG).

Belongs to the AAE transporter (TC 2.A.81) family. YidE subfamily.

Its subcellular location is the cell membrane. This chain is Putative transport protein YidE, found in Escherichia coli O6:K15:H31 (strain 536 / UPEC).